The primary structure comprises 351 residues: Thiamine-phosphate synthase (351 aa).

The unknown stretch occupies residues 1–129; that stretch reads MVEPYSQKEQ…AKACKQMRYQ (129 aa). The interval 65–85 is disordered; sequence LRAARDTPGDPGTELTHPQEE. The thiamine-phosphate synthase stretch occupies residues 130-351; sequence VYTLESNLMG…SQLNRIKPEL (222 aa). Residues 177 to 181 and Asn209 each bind 4-amino-2-methyl-5-(diphosphooxymethyl)pyrimidine; that span reads QYRDK. Residues Asp210 and Asp229 each coordinate Mg(2+). A 4-amino-2-methyl-5-(diphosphooxymethyl)pyrimidine-binding site is contributed by Ser248. 2-[(2R,5Z)-2-carboxy-4-methylthiazol-5(2H)-ylidene]ethyl phosphate is bound at residue 274–276; the sequence is TPT. A 4-amino-2-methyl-5-(diphosphooxymethyl)pyrimidine-binding site is contributed by Lys277. Gly304 contacts 2-[(2R,5Z)-2-carboxy-4-methylthiazol-5(2H)-ylidene]ethyl phosphate.

The protein belongs to the thiamine-phosphate synthase family. It depends on Mg(2+) as a cofactor.

The catalysed reaction is 2-[(2R,5Z)-2-carboxy-4-methylthiazol-5(2H)-ylidene]ethyl phosphate + 4-amino-2-methyl-5-(diphosphooxymethyl)pyrimidine + 2 H(+) = thiamine phosphate + CO2 + diphosphate. The enzyme catalyses 2-(2-carboxy-4-methylthiazol-5-yl)ethyl phosphate + 4-amino-2-methyl-5-(diphosphooxymethyl)pyrimidine + 2 H(+) = thiamine phosphate + CO2 + diphosphate. It catalyses the reaction 4-methyl-5-(2-phosphooxyethyl)-thiazole + 4-amino-2-methyl-5-(diphosphooxymethyl)pyrimidine + H(+) = thiamine phosphate + diphosphate. Its pathway is cofactor biosynthesis; thiamine diphosphate biosynthesis; thiamine phosphate from 4-amino-2-methyl-5-diphosphomethylpyrimidine and 4-methyl-5-(2-phosphoethyl)-thiazole: step 1/1. Condenses 4-methyl-5-(beta-hydroxyethyl)thiazole monophosphate (THZ-P) and 2-methyl-4-amino-5-hydroxymethyl pyrimidine pyrophosphate (HMP-PP) to form thiamine monophosphate (TMP). The sequence is that of Thiamine-phosphate synthase from Nostoc punctiforme (strain ATCC 29133 / PCC 73102).